Here is a 411-residue protein sequence, read N- to C-terminus: Arginine deiminase (411 aa).

C401 (amidino-cysteine intermediate) is an active-site residue.

This sequence belongs to the arginine deiminase family.

Its subcellular location is the cytoplasm. It catalyses the reaction L-arginine + H2O = L-citrulline + NH4(+). The protein operates within amino-acid degradation; L-arginine degradation via ADI pathway; carbamoyl phosphate from L-arginine: step 1/2. This is Arginine deiminase from Streptococcus pyogenes serotype M49 (strain NZ131).